A 95-amino-acid chain; its full sequence is Large ribosomal subunit protein bL25 (95 aa).

It belongs to the bacterial ribosomal protein bL25 family. Part of the 50S ribosomal subunit; part of the 5S rRNA/L5/L18/L25 subcomplex. Contacts the 5S rRNA. Binds to the 5S rRNA independently of L5 and L18.

This is one of the proteins that binds to the 5S RNA in the ribosome where it forms part of the central protuberance. The chain is Large ribosomal subunit protein bL25 from Glaesserella parasuis serovar 5 (strain SH0165) (Haemophilus parasuis).